Consider the following 289-residue polypeptide: tRNA dimethylallyltransferase (289 aa).

9–16 (GTTASGKT) is a binding site for ATP. Substrate is bound at residue 11–16 (TASGKT). Positions 34–37 (DSLC) are interaction with substrate tRNA.

This sequence belongs to the IPP transferase family. Monomer. Mg(2+) is required as a cofactor.

It carries out the reaction adenosine(37) in tRNA + dimethylallyl diphosphate = N(6)-dimethylallyladenosine(37) in tRNA + diphosphate. Functionally, catalyzes the transfer of a dimethylallyl group onto the adenine at position 37 in tRNAs that read codons beginning with uridine, leading to the formation of N6-(dimethylallyl)adenosine (i(6)A). This is tRNA dimethylallyltransferase from Campylobacter jejuni subsp. doylei (strain ATCC BAA-1458 / RM4099 / 269.97).